The primary structure comprises 152 residues: UPF0266 membrane protein YobD (152 aa).

3 consecutive transmembrane segments (helical) span residues Leu-6 to Met-26, Ile-45 to His-65, and Ala-67 to Ile-87.

This sequence belongs to the UPF0266 family.

Its subcellular location is the cell inner membrane. This is UPF0266 membrane protein YobD from Shigella boydii serotype 18 (strain CDC 3083-94 / BS512).